The following is a 425-amino-acid chain: Non-structural protein 2 (425 aa).

The stretch at 29–64 (VSFDELVALREENAKLKQENEALKAKLHRLESDWTT) forms a coiled coil.

This Banna virus (BAV) protein is Non-structural protein 2 (Segment-6).